The primary structure comprises 396 residues: Obg-like ATPase 1 (396 aa).

In terms of domain architecture, OBG-type G spans 23–283; it reads LKIGIVGLPN…MSAEEKQKYL (261 aa). 32 to 37 provides a ligand contact to ATP; sequence NVGKST. Mg(2+)-binding residues include Ser36 and Thr56. An ATP-binding site is contributed by Leu231. Residues 267–274 carry the Nuclear export signal motif; it reads LELKLQDM. The TGS domain maps to 304 to 387; the sequence is QLEYFFTAGP…EDGDIIFFKF (84 aa).

Belongs to the TRAFAC class OBG-HflX-like GTPase superfamily. OBG GTPase family. YchF/OLA1 subfamily. Monomer. Requires Mg(2+) as cofactor.

The protein resides in the cytoplasm. Its subcellular location is the nucleus. The protein localises to the nucleolus. In terms of biological role, hydrolyzes ATP, and can also hydrolyze GTP with lower efficiency. Has lower affinity for GTP. This chain is Obg-like ATPase 1, found in Gallus gallus (Chicken).